A 274-amino-acid chain; its full sequence is Large ribosomal subunit protein uL2cz/uL2cy (274 aa).

Disordered stretches follow at residues 1-21 and 224-274; these read MAIH…VDSQ and NPVD…RRSK.

It belongs to the universal ribosomal protein uL2 family. Part of the 50S ribosomal subunit.

Its subcellular location is the plastid. The protein localises to the chloroplast. The sequence is that of Large ribosomal subunit protein uL2cz/uL2cy (rpl2-A) from Gossypium hirsutum (Upland cotton).